The sequence spans 315 residues: Ribonuclease Z (315 aa).

His-61, His-63, Asp-65, His-66, His-151, Asp-219, and His-278 together coordinate Zn(2+). Asp-65 functions as the Proton acceptor in the catalytic mechanism.

It belongs to the RNase Z family. In terms of assembly, homodimer. It depends on Zn(2+) as a cofactor.

It catalyses the reaction Endonucleolytic cleavage of RNA, removing extra 3' nucleotides from tRNA precursor, generating 3' termini of tRNAs. A 3'-hydroxy group is left at the tRNA terminus and a 5'-phosphoryl group is left at the trailer molecule.. Zinc phosphodiesterase, which displays some tRNA 3'-processing endonuclease activity. Probably involved in tRNA maturation, by removing a 3'-trailer from precursor tRNA. In Clostridium botulinum (strain Alaska E43 / Type E3), this protein is Ribonuclease Z.